A 396-amino-acid chain; its full sequence is Elongation factor Tu 1 (396 aa).

The tr-type G domain maps to 10-206; the sequence is KPHVNVGTIG…ALDSYIPLPE (197 aa). Residues 19-26 form a G1 region; the sequence is GHVDHGKT. 19–26 is a GTP binding site; it reads GHVDHGKT. A Mg(2+)-binding site is contributed by Thr26. Residues 60 to 64 are G2; it reads GITIN. The tract at residues 81–84 is G3; it reads DCPG. GTP contacts are provided by residues 81–85 and 136–139; these read DCPGH and NKCD. The interval 136-139 is G4; sequence NKCD. Positions 174–176 are G5; that stretch reads SAK.

Belongs to the TRAFAC class translation factor GTPase superfamily. Classic translation factor GTPase family. EF-Tu/EF-1A subfamily. Monomer.

The protein localises to the cytoplasm. The enzyme catalyses GTP + H2O = GDP + phosphate + H(+). Its function is as follows. GTP hydrolase that promotes the GTP-dependent binding of aminoacyl-tRNA to the A-site of ribosomes during protein biosynthesis. The polypeptide is Elongation factor Tu 1 (Albidiferax ferrireducens (strain ATCC BAA-621 / DSM 15236 / T118) (Rhodoferax ferrireducens)).